The primary structure comprises 233 residues: 2-C-methyl-D-erythritol 4-phosphate cytidylyltransferase (233 aa).

Belongs to the IspD/TarI cytidylyltransferase family. IspD subfamily.

It catalyses the reaction 2-C-methyl-D-erythritol 4-phosphate + CTP + H(+) = 4-CDP-2-C-methyl-D-erythritol + diphosphate. The protein operates within isoprenoid biosynthesis; isopentenyl diphosphate biosynthesis via DXP pathway; isopentenyl diphosphate from 1-deoxy-D-xylulose 5-phosphate: step 2/6. Its function is as follows. Catalyzes the formation of 4-diphosphocytidyl-2-C-methyl-D-erythritol from CTP and 2-C-methyl-D-erythritol 4-phosphate (MEP). The protein is 2-C-methyl-D-erythritol 4-phosphate cytidylyltransferase of Thiobacillus denitrificans (strain ATCC 25259 / T1).